Here is a 720-residue protein sequence, read N- to C-terminus: Secreted RxLR effector protein 138 (720 aa).

The N-terminal stretch at 1–20 is a signal peptide; sequence MRSAFYVAIVLLVAAGSQTA. Residues 56–71 carry the RxLR-dEER motif; the sequence is RNLKDDFMFSAGDEER. A disordered region spans residues 264–335; the sequence is ESNTRKRNNV…VAPPEPSRLD (72 aa). Over residues 320 to 335 the composition is skewed to basic and acidic residues; it reads KQHDHRVAPPEPSRLD. A glycan (N-linked (GlcNAc...) asparagine) is linked at N609.

The protein belongs to the RxLR effector family.

The protein localises to the secreted. Its subcellular location is the host nucleus. Secreted effector that acts as an elicitor that induces cell death in host plant cells. The sequence is that of Secreted RxLR effector protein 138 from Plasmopara viticola (Downy mildew of grapevine).